The chain runs to 82 residues: RNA-binding protein Hfq (82 aa).

In terms of domain architecture, Sm spans 9-68 (DPYLNTLRKERVPVSIYLVNGIKLQGQIESFDQFVILLKNTVSQMVYKTAISTVVPSRPV).

It belongs to the Hfq family. As to quaternary structure, homohexamer.

RNA chaperone that binds small regulatory RNA (sRNAs) and mRNAs to facilitate mRNA translational regulation in response to envelope stress, environmental stress and changes in metabolite concentrations. Also binds with high specificity to tRNAs. The sequence is that of RNA-binding protein Hfq from Pseudomonas aeruginosa.